The primary structure comprises 419 residues: Lipoyl synthase, mitochondrial (419 aa).

The N-terminal 26 residues, 1-26 (MAVCAGRLKCFGNPAVSLRTAASRAY), are a transit peptide targeting the mitochondrion. Positions 28–47 (TTTSPDPAIPSSSSASSSSA) are enriched in low complexity. A disordered region spans residues 28–61 (TTTSPDPAIPSSSSASSSSALPKRPQTSFRDKLN). [4Fe-4S] cluster-binding residues include Cys-136, Cys-141, Cys-147, Cys-167, Cys-171, Cys-174, and Ser-382. The region spanning 150-371 (GSSKSAATAT…KDRALEMGFL (222 aa)) is the Radical SAM core domain. Residues 399 to 419 (AESTGPESTNVPNVTPDAIVR) are disordered.

It belongs to the radical SAM superfamily. Lipoyl synthase family. [4Fe-4S] cluster is required as a cofactor.

The protein resides in the mitochondrion. It catalyses the reaction [[Fe-S] cluster scaffold protein carrying a second [4Fe-4S](2+) cluster] + N(6)-octanoyl-L-lysyl-[protein] + 2 oxidized [2Fe-2S]-[ferredoxin] + 2 S-adenosyl-L-methionine + 4 H(+) = [[Fe-S] cluster scaffold protein] + N(6)-[(R)-dihydrolipoyl]-L-lysyl-[protein] + 4 Fe(3+) + 2 hydrogen sulfide + 2 5'-deoxyadenosine + 2 L-methionine + 2 reduced [2Fe-2S]-[ferredoxin]. It participates in protein modification; protein lipoylation via endogenous pathway; protein N(6)-(lipoyl)lysine from octanoyl-[acyl-carrier-protein]: step 2/2. Its function is as follows. Catalyzes the radical-mediated insertion of two sulfur atoms into the C-6 and C-8 positions of the octanoyl moiety bound to the lipoyl domains of lipoate-dependent enzymes, thereby converting the octanoylated domains into lipoylated derivatives. The polypeptide is Lipoyl synthase, mitochondrial (Coccidioides posadasii (strain C735) (Valley fever fungus)).